Reading from the N-terminus, the 187-residue chain is NADH-quinone oxidoreductase subunit B (187 aa).

Positions 66, 67, 131, and 161 each coordinate [4Fe-4S] cluster.

Belongs to the complex I 20 kDa subunit family. In terms of assembly, NDH-1 is composed of 14 different subunits. Subunits NuoB, C, D, E, F, and G constitute the peripheral sector of the complex. Requires [4Fe-4S] cluster as cofactor.

The protein resides in the cell inner membrane. The enzyme catalyses a quinone + NADH + 5 H(+)(in) = a quinol + NAD(+) + 4 H(+)(out). NDH-1 shuttles electrons from NADH, via FMN and iron-sulfur (Fe-S) centers, to quinones in the respiratory chain. The immediate electron acceptor for the enzyme in this species is believed to be ubiquinone. Couples the redox reaction to proton translocation (for every two electrons transferred, four hydrogen ions are translocated across the cytoplasmic membrane), and thus conserves the redox energy in a proton gradient. This Methylocella silvestris (strain DSM 15510 / CIP 108128 / LMG 27833 / NCIMB 13906 / BL2) protein is NADH-quinone oxidoreductase subunit B.